The primary structure comprises 861 residues: Glucans biosynthesis glucosyltransferase H (861 aa).

A run of 6 helical transmembrane segments spans residues 142 to 162, 188 to 208, 516 to 536, 573 to 593, 600 to 620, and 683 to 703; these read FILLLLMLAQTSVATYYMKGI, VLPYVIQFGILALFAILFCWV, VFLTGVMSYLSAPLWFFFLVL, LFSTTLTLLFLPKLLSVMLIW, FGGVIRVTLSMLLEMFFSVLL, and FLWWLSPIVGSLILSIPVSVI.

It belongs to the glycosyltransferase 2 family. OpgH subfamily.

It is found in the cell inner membrane. The protein operates within glycan metabolism; osmoregulated periplasmic glucan (OPG) biosynthesis. Functionally, involved in the biosynthesis of osmoregulated periplasmic glucans (OPGs). The polypeptide is Glucans biosynthesis glucosyltransferase H (Pseudomonas aeruginosa (strain UCBPP-PA14)).